Reading from the N-terminus, the 344-residue chain is Holliday junction branch migration complex subunit RuvB (344 aa).

Residues 4–194 form a large ATPase domain (RuvB-L) region; the sequence is CLLRFCYNSL…FGITGHMEYY (191 aa). ATP-binding positions include L33, R34, G75, K78, T79, T80, 141 to 143, R184, Y194, and R231; that span reads EDF. T79 contacts Mg(2+). The tract at residues 195–265 is small ATPAse domain (RuvB-S); it reads TDIDLTEIVE…ITDKALTMLD (71 aa). The segment at 268–344 is head domain (RuvB-H); that stretch reads HEGLDYVDQK…YEHLGYRYTE (77 aa). DNA is bound by residues R304, R323, R325, and R328.

Belongs to the RuvB family. In terms of assembly, homohexamer. Forms an RuvA(8)-RuvB(12)-Holliday junction (HJ) complex. HJ DNA is sandwiched between 2 RuvA tetramers; dsDNA enters through RuvA and exits via RuvB. An RuvB hexamer assembles on each DNA strand where it exits the tetramer. Each RuvB hexamer is contacted by two RuvA subunits (via domain III) on 2 adjacent RuvB subunits; this complex drives branch migration. In the full resolvosome a probable DNA-RuvA(4)-RuvB(12)-RuvC(2) complex forms which resolves the HJ.

The protein resides in the cytoplasm. It catalyses the reaction ATP + H2O = ADP + phosphate + H(+). Its function is as follows. The RuvA-RuvB-RuvC complex processes Holliday junction (HJ) DNA during genetic recombination and DNA repair, while the RuvA-RuvB complex plays an important role in the rescue of blocked DNA replication forks via replication fork reversal (RFR). RuvA specifically binds to HJ cruciform DNA, conferring on it an open structure. The RuvB hexamer acts as an ATP-dependent pump, pulling dsDNA into and through the RuvAB complex. RuvB forms 2 homohexamers on either side of HJ DNA bound by 1 or 2 RuvA tetramers; 4 subunits per hexamer contact DNA at a time. Coordinated motions by a converter formed by DNA-disengaged RuvB subunits stimulates ATP hydrolysis and nucleotide exchange. Immobilization of the converter enables RuvB to convert the ATP-contained energy into a lever motion, pulling 2 nucleotides of DNA out of the RuvA tetramer per ATP hydrolyzed, thus driving DNA branch migration. The RuvB motors rotate together with the DNA substrate, which together with the progressing nucleotide cycle form the mechanistic basis for DNA recombination by continuous HJ branch migration. Branch migration allows RuvC to scan DNA until it finds its consensus sequence, where it cleaves and resolves cruciform DNA. The sequence is that of Holliday junction branch migration complex subunit RuvB from Streptococcus mutans serotype c (strain ATCC 700610 / UA159).